Consider the following 608-residue polypeptide: uncharacterized protein (608 aa).

The segment at 1-21 (MHTNSPLRADNQDLETQPLLR) is disordered. At Thr24 the chain carries Phosphothreonine. At Ser27 the chain carries Phosphoserine. A helical transmembrane segment spans residues 55–75 (IIYLLGIVLLSFFGVSIVQYI). N-linked (GlcNAc...) asparagine glycans are attached at residues Asn115, Asn141, Asn169, Asn407, Asn425, Asn449, Asn453, Asn527, and Asn580.

It is found in the membrane. This is an uncharacterized protein from Saccharomyces cerevisiae (strain ATCC 204508 / S288c) (Baker's yeast).